An 851-amino-acid chain; its full sequence is MARLNPSKPSSRGGKPRSSSADAMAEHKPPPGRPKREGEGASKKKAKSGGFESMGLCEEVYRGVRHKGYRVPTPIQRKAMPLILAGHDIAAMARTGSGKTAAFLVPMIQRLRRHDAGAGIRALILSPTRDLATQTLKFAQQLGKFTDLKISLIVGGDSMESQFEELAENPDIIIATPGRLVHHLAEVEDLNLRTVEYVVFDEADSLFSLGLIQQLHDILHKLSDTRQTLLFSATLPQALADFAKAGLRDPQIVRLDLDKKISPDLKLAFFTLRQEEKLAALLYLVRERISSEEQTIIFVSTKHHVEFLNILFREEGLEPSLSYGAMDQEARNIHISKFRARKTMILIVTDVAARGLDIPLLDNVVNWDFPAKPKLFVHRVGRVARQGRSGTAYTFVTSEDMAYLLDLHLFLSKPLRPAPTEEELLKDMEGMNLKIDRALANGETVYGRFPQTIIDLVSDGIREVINGCTDLIALEKPCTNAFHLYLKTRPMPSTESIRRVKDLPREGLHPIFRDVLGSDELSALAFSERLKSFRPKQTILEAEGEAARGSNQWLDVMKKKREVHEGIINLVHQKNNVDHEPKEELVENISNWERKDVCGNKRKLQSFRDEEYYISSVPQNQHLEAGLSVRANEGFVENRLDAAVLDLVDDETSGMQAQKTRYHWKKNKFVKLNSGDRVTATGKIKTESGAKLKPTKTGIYKKWQQKTHRSIDTGRKYGGFAEEGASTTGSHQRGNRKHTAAGRGRRYIPNADVPSEIRNPEQIQKSRQQKAMDIARMKNRSTKESKFQKFQKNNRRHDGPSKDGKFQKNRRPDGNGKNRRPDGNGKGRGKGKGNANGFGKGKGKMKGKGTR.

Residues 1–49 (MARLNPSKPSSRGGKPRSSSADAMAEHKPPPGRPKREGEGASKKKAKSG) are disordered. The span at 7–20 (SKPSSRGGKPRSSS) shows a compositional bias: low complexity. Over residues 24 to 42 (MAEHKPPPGRPKREGEGAS) the composition is skewed to basic and acidic residues. The short motif at 49 to 77 (GGFESMGLCEEVYRGVRHKGYRVPTPIQR) is the Q motif element. The 174-residue stretch at 80 to 253 (MPLILAGHDI…KAGLRDPQIV (174 aa)) folds into the Helicase ATP-binding domain. ATP is bound at residue 93-100 (ARTGSGKT). The DEAD box signature appears at 201–204 (DEAD). Positions 277 to 426 (KLAALLYLVR…PAPTEEELLK (150 aa)) constitute a Helicase C-terminal domain. Positions 702 to 851 (KWQQKTHRSI…KGKMKGKGTR (150 aa)) are disordered. Residues 733 to 746 (RGNRKHTAAGRGRR) show a composition bias toward basic residues. Composition is skewed to basic and acidic residues over residues 773–787 (DIARMKNRSTKESKF) and 796–825 (RHDGPSKDGKFQKNRRPDGNGKNRRPDGNG). Over residues 841 to 851 (GKGKMKGKGTR) the composition is skewed to basic residues.

It belongs to the DEAD box helicase family. DDX54/DBP10 subfamily.

It carries out the reaction ATP + H2O = ADP + phosphate + H(+). The polypeptide is DEAD-box ATP-dependent RNA helicase 29 (Oryza sativa subsp. indica (Rice)).